Reading from the N-terminus, the 299-residue chain is Ribosome-inactivating protein saporin-6 (299 aa).

The signal sequence occupies residues 1 to 24 (MKIYVVATIAWILLQFSAWTTTDA). Residue Glu-200 is part of the active site. Residues 278–299 (SSNEANSTVRHYGPLKPTLLIT) constitute a propeptide that is removed on maturation. Asn-283 carries N-linked (GlcNAc...) asparagine glycosylation.

This sequence belongs to the ribosome-inactivating protein family. Type 1 RIP subfamily. In terms of tissue distribution, seeds and leaves of the plant.

The catalysed reaction is Endohydrolysis of the N-glycosidic bond at one specific adenosine on the 28S rRNA.. Functionally, ribosome-inactivating protein of type 1, inhibits protein synthesis in animal cells. Useful as immunotoxin for pharmacological applications. The polypeptide is Ribosome-inactivating protein saporin-6 (SAP6) (Saponaria officinalis (Common soapwort)).